The primary structure comprises 283 residues: Polyamine aminopropyltransferase (283 aa).

The PABS domain occupies 5–238; that stretch reads TTWIDEYHKG…GIWSWTFASS (234 aa). Position 32 (Q32) interacts with S-methyl-5'-thioadenosine. Residues H63 and D87 each contribute to the spermidine site. S-methyl-5'-thioadenosine is bound by residues E107 and 139-140; that span reads DG. The active-site Proton acceptor is D158. 158–161 lines the spermidine pocket; it reads DCSD.

It belongs to the spermidine/spermine synthase family. In terms of assembly, homodimer or homotetramer.

The protein localises to the cytoplasm. It catalyses the reaction S-adenosyl 3-(methylsulfanyl)propylamine + putrescine = S-methyl-5'-thioadenosine + spermidine + H(+). Its pathway is amine and polyamine biosynthesis; spermidine biosynthesis; spermidine from putrescine: step 1/1. Its function is as follows. Catalyzes the irreversible transfer of a propylamine group from the amino donor S-adenosylmethioninamine (decarboxy-AdoMet) to putrescine (1,4-diaminobutane) to yield spermidine. This chain is Polyamine aminopropyltransferase, found in Prochlorococcus marinus (strain AS9601).